We begin with the raw amino-acid sequence, 389 residues long: UDP-N-acetylglucosamine--N-acetylmuramyl-(pentapeptide) pyrophosphoryl-undecaprenol N-acetylglucosamine transferase (389 aa).

UDP-N-acetyl-alpha-D-glucosamine is bound by residues 39–41 (TGG), asparagine 157, arginine 193, serine 221, isoleucine 275, 294–299 (ALTVSE), and glutamine 320.

This sequence belongs to the glycosyltransferase 28 family. MurG subfamily.

The protein localises to the cell inner membrane. It catalyses the reaction di-trans,octa-cis-undecaprenyl diphospho-N-acetyl-alpha-D-muramoyl-L-alanyl-D-glutamyl-meso-2,6-diaminopimeloyl-D-alanyl-D-alanine + UDP-N-acetyl-alpha-D-glucosamine = di-trans,octa-cis-undecaprenyl diphospho-[N-acetyl-alpha-D-glucosaminyl-(1-&gt;4)]-N-acetyl-alpha-D-muramoyl-L-alanyl-D-glutamyl-meso-2,6-diaminopimeloyl-D-alanyl-D-alanine + UDP + H(+). Its pathway is cell wall biogenesis; peptidoglycan biosynthesis. Functionally, cell wall formation. Catalyzes the transfer of a GlcNAc subunit on undecaprenyl-pyrophosphoryl-MurNAc-pentapeptide (lipid intermediate I) to form undecaprenyl-pyrophosphoryl-MurNAc-(pentapeptide)GlcNAc (lipid intermediate II). The protein is UDP-N-acetylglucosamine--N-acetylmuramyl-(pentapeptide) pyrophosphoryl-undecaprenol N-acetylglucosamine transferase of Saccharophagus degradans (strain 2-40 / ATCC 43961 / DSM 17024).